The following is a 235-amino-acid chain: MSVISMKQLLEAGVHFGHQTRRWNPKMAPYIFTERNGIYIIDLQQTVEKLEQAYEFVKKLAMEGGTILFVGTKKQAQDSIKEEAERCGMFYVNQRWLGGTLTNFKTIRGRIQRLKELKKMEEDGTFDVLPKKEVIKLRKEKERLQKFLGGIENMESLPSALFIVDPKKEAIAVAEARSLEIPIVAIVDTNCDPELIDYPIPGNDDAIRAVKLITSKIADAVIEGNQGEQFAASEE.

The protein belongs to the universal ribosomal protein uS2 family.

This chain is Small ribosomal subunit protein uS2, found in Thermoanaerobacter pseudethanolicus (strain ATCC 33223 / 39E) (Clostridium thermohydrosulfuricum).